A 44-amino-acid polypeptide reads, in one-letter code: Protein non-structural 7b (44 aa).

The helical transmembrane segment at 9 to 29 threads the bilayer; that stretch reads FYLCFLAFLLFLVLIMLIIFW.

The protein resides in the host membrane. This is Protein non-structural 7b from Homo sapiens (Human).